The sequence spans 305 residues: NADH-ubiquinone oxidoreductase chain 1 (305 aa).

8 helical membrane passes run 1 to 21 (MWVLINLLILMIMVLISVAFL), 75 to 95 (MLMFFLSLVMWILYPWFGFMY), 101 to 121 (ILFMLLVLGLSVYPVLFVGWI), 134 to 154 (LVSTMISFEINLFFLVFSLMM), 173 to 193 (FAILLYPLYLMMFTSMLIELN), 219 to 239 (FVLIFLSEYMNIMFMSVILSL), 249 to 269 (IKFILIYLFHICLIIWIRGIL), and 285 to 305 (MLMLVMIYLMYLYFMKEFLCI).

This sequence belongs to the complex I subunit 1 family.

It is found in the mitochondrion inner membrane. It catalyses the reaction a ubiquinone + NADH + 5 H(+)(in) = a ubiquinol + NAD(+) + 4 H(+)(out). Its function is as follows. Core subunit of the mitochondrial membrane respiratory chain NADH dehydrogenase (Complex I) that is believed to belong to the minimal assembly required for catalysis. Complex I functions in the transfer of electrons from NADH to the respiratory chain. The immediate electron acceptor for the enzyme is believed to be ubiquinone. The polypeptide is NADH-ubiquinone oxidoreductase chain 1 (ND1) (Apis mellifera ligustica (Common honeybee)).